The following is a 285-amino-acid chain: Eukaryotic translation initiation factor 2 subunit beta (285 aa).

The tract at residues 30-69 is disordered; sequence DAAVNGKENGSGDDLFAGLKKKKKKSKSVSADAEAEKEPT. Residue serine 40 is modified to Phosphoserine. The residue at position 69 (threonine 69) is a Phosphothreonine. Phosphoserine is present on residues serine 80, serine 92, and serine 112. Threonine 116 bears the Phosphothreonine mark. Serine 118 carries the post-translational modification Phosphoserine. Residues 236–262 form a C4-type zinc finger; that stretch reads CKTCKSINTELKREQSNRLFFMVCKSC.

It belongs to the eIF-2-beta/eIF-5 family. In terms of assembly, eukaryotic translation initiation factor 2 eIF2 is a heterotrimeric complex composed of an alpha, a beta and a gamma subunit. The factors eIF-1, eIF-2, eIF-3, TIF5/eIF-5 and methionyl-tRNAi form a multifactor complex (MFC) that may bind to the 40S ribosome. Interacts with GCD6. Interacts with GCD1. Interacts with TIF5/eIF-5. Interacts with CDC123.

It is found in the cytoplasm. The protein resides in the cytosol. Functionally, component of the eIF2 complex that functions in the early steps of protein synthesis by forming a ternary complex with GTP and initiator tRNA. This complex binds to a 40S ribosomal subunit, followed by mRNA binding to form a 43S pre-initiation complex (43S PIC). Junction of the 60S ribosomal subunit to form the 80S initiation complex is preceded by hydrolysis of the GTP bound to eIF2 and release of an eIF2-GDP binary complex. In order for eIF2 to recycle and catalyze another round of initiation, the GDP bound to eIF2 must exchange with GTP by way of a reaction catalyzed by eIF2B. The polypeptide is Eukaryotic translation initiation factor 2 subunit beta (SUI3) (Saccharomyces cerevisiae (strain ATCC 204508 / S288c) (Baker's yeast)).